The primary structure comprises 476 residues: Bridging integrator 2 (476 aa).

The BAR domain maps to 26 to 242; it reads VLQKLGKTVE…MGKLDKQHSS (217 aa). Disordered regions lie at residues 269–369 and 395–476; these read YPCP…TEGA and GAAP…LTPL. Positions 279 to 292 are enriched in polar residues; it reads EPSSGAEQTPTSPR. Residues 310-324 show a composition bias toward pro residues; that stretch reads PAEPGAPMPGPPPAS. The span at 325–339 shows a compositional bias: low complexity; that stretch reads PTSVRSASESESECS. The span at 340 to 353 shows a compositional bias: basic and acidic residues; sequence GESREIDLSPKEME. A compositionally biased stretch (polar residues) spans 461–476; it reads VSCNPPQDPSESLTPL.

It localises to the cytoplasm. This is Bridging integrator 2 (BIN2) from Gallus gallus (Chicken).